A 367-amino-acid polypeptide reads, in one-letter code: F-box protein At3g56470 (367 aa).

The span at 1 to 18 shows a compositional bias: basic residues; it reads MVTRRRSKKKKKTKRKKQ. The segment at 1–24 is disordered; sequence MVTRRRSKKKKKTKRKKQSSKEKE. One can recognise an F-box domain in the interval 26–81; the sequence is YQTFINLPCDLLQLVISRLPLKDNIRASAVCKTWHEACVSLRVIHTSPWLIYFSKT.

The polypeptide is F-box protein At3g56470 (Arabidopsis thaliana (Mouse-ear cress)).